We begin with the raw amino-acid sequence, 266 residues long: Putative transmembrane ascorbate-dependent reductase CYB561 homolog (266 aa).

Residues 1–22 are Cytoplasmic-facing; it reads MSLLFDPGFVILREDQSVKLFN. Residues 23-43 traverse the membrane as a helical segment; the sequence is IILVMSQVFGGLAVLLVTIWM. A Cytochrome b561 domain is found at 27 to 240; the sequence is MSQVFGGLAV…YTVCVLLLVL (214 aa). Residues 44 to 61 lie on the Vesicular side of the membrane; sequence SKFESGFAWNEDPDKEFN. Residues 62–82 traverse the membrane as a helical segment; it reads YHPTFMIMGMVFLFGEALLVY. Heme b-binding residues include histidine 63, arginine 83, and lysine 90. Residues 83 to 95 lie on the Cytoplasmic side of the membrane; it reads RVFRNERKKFSKT. L-ascorbate contacts are provided by lysine 90 and lysine 94. Residues 96–116 traverse the membrane as a helical segment; the sequence is LHVILHSCVLVFMLMALKAVF. Heme b-binding positions include histidine 97, 134–137, and histidine 139; that span reads NLVS. At 117–141 the chain is on the vesicular side; the sequence is DYHNLHKDPSGNPAPIVNLVSLHSW. Residues 142–162 form a helical membrane-spanning segment; that stretch reads IGLSVVILYFAQYIVGFITYF. At 163–176 the chain is on the cytoplasmic side; sequence FPGMPIPIRQLVMP. Arginine 171 contributes to the L-ascorbate binding site. A helical transmembrane segment spans residues 177-197; that stretch reads FHQMFGVLIFIFVSITVAMGI. Positions 178 and 199 each coordinate heme b. The Vesicular segment spans residues 198 to 219; the sequence is SERAAWKHTCWTKEGQMCAQQA. Residues 220–240 traverse the membrane as a helical segment; that stretch reads TSSFVGVFTFLYTVCVLLLVL. Topologically, residues 241 to 266 are cytoplasmic; that stretch reads NPRWKRQSLPEEEGLHHLTSSHSMSD. Heme b is bound at residue lysine 245.

Heme b is required as a cofactor.

Its subcellular location is the membrane. The enzyme catalyses monodehydro-L-ascorbate radical(out) + L-ascorbate(in) = monodehydro-L-ascorbate radical(in) + L-ascorbate(out). Functionally, putative transmembrane reductase that uses ascorbate as an electron donor in the cytoplasm and transfers electrons across membranes to reduce monodehydro-L-ascorbate radical in the lumen of secretory vesicles. The polypeptide is Putative transmembrane ascorbate-dependent reductase CYB561 homolog (Caenorhabditis elegans).